Here is a 178-residue protein sequence, read N- to C-terminus: Crossover junction endodeoxyribonuclease RuvC (178 aa).

Active-site residues include D7, E68, and D141. The Mg(2+) site is built by D7, E68, and D141.

It belongs to the RuvC family. Homodimer which binds Holliday junction (HJ) DNA. The HJ becomes 2-fold symmetrical on binding to RuvC with unstacked arms; it has a different conformation from HJ DNA in complex with RuvA. In the full resolvosome a probable DNA-RuvA(4)-RuvB(12)-RuvC(2) complex forms which resolves the HJ. It depends on Mg(2+) as a cofactor.

The protein resides in the cytoplasm. The enzyme catalyses Endonucleolytic cleavage at a junction such as a reciprocal single-stranded crossover between two homologous DNA duplexes (Holliday junction).. Its function is as follows. The RuvA-RuvB-RuvC complex processes Holliday junction (HJ) DNA during genetic recombination and DNA repair. Endonuclease that resolves HJ intermediates. Cleaves cruciform DNA by making single-stranded nicks across the HJ at symmetrical positions within the homologous arms, yielding a 5'-phosphate and a 3'-hydroxyl group; requires a central core of homology in the junction. The consensus cleavage sequence is 5'-(A/T)TT(C/G)-3'. Cleavage occurs on the 3'-side of the TT dinucleotide at the point of strand exchange. HJ branch migration catalyzed by RuvA-RuvB allows RuvC to scan DNA until it finds its consensus sequence, where it cleaves and resolves the cruciform DNA. The chain is Crossover junction endodeoxyribonuclease RuvC from Parafrankia sp. (strain EAN1pec).